Here is a 208-residue protein sequence, read N- to C-terminus: Large ribosomal subunit protein uL3 (208 aa).

The segment at 126–150 (NQSRGPMAHGSRYHRRPGSMGPVAP) is disordered.

This sequence belongs to the universal ribosomal protein uL3 family. In terms of assembly, part of the 50S ribosomal subunit. Forms a cluster with proteins L14 and L19.

One of the primary rRNA binding proteins, it binds directly near the 3'-end of the 23S rRNA, where it nucleates assembly of the 50S subunit. This is Large ribosomal subunit protein uL3 from Exiguobacterium sibiricum (strain DSM 17290 / CCUG 55495 / CIP 109462 / JCM 13490 / 255-15).